The primary structure comprises 109 residues: Oncomodulin (109 aa).

An N-acetylserine modification is found at Ser-2. 2 consecutive EF-hand domains span residues 39–74 (MSAS…FESG) and 78–109 (LTES…MVHS). Residues Asp-52, Asp-54, Ser-56, Tyr-58, Glu-63, Asp-91, Asp-93, Asp-95, Lys-97, and Glu-102 each contribute to the Ca(2+) site.

It belongs to the parvalbumin family. In terms of tissue distribution, abundant in the organ of Corti.

Has some calmodulin-like activity with respect to enzyme activation and growth regulation. Binds two calcium ions. The chain is Oncomodulin (OCM) from Cavia porcellus (Guinea pig).